The chain runs to 259 residues: Protein N-terminal and lysine N-methyltransferase efm7 (259 aa).

Residues Trp53, 80 to 82, Asp102, Trp138, and Ala164 each bind S-adenosyl-L-methionine; that span reads GAA.

This sequence belongs to the class I-like SAM-binding methyltransferase superfamily. EFM7 family.

The protein localises to the cytoplasm. S-adenosyl-L-methionine-dependent protein methyltransferase that trimethylates the N-terminal glycine 'Gly-2' of elongation factor 1-alpha, before also catalyzing the mono- and dimethylation of 'Lys-3'. The sequence is that of Protein N-terminal and lysine N-methyltransferase efm7 from Emericella nidulans (strain FGSC A4 / ATCC 38163 / CBS 112.46 / NRRL 194 / M139) (Aspergillus nidulans).